Here is a 366-residue protein sequence, read N- to C-terminus: MRVMAPRTLILLLSGALALTETWAGSHSMRYFYTSVSRPGRGEPRFISVGYVDDTQFVRFDSDAASPRGEPRAPWVEQEGPEYWDRETQKYKRQAQTDRVNLRKLRGYYNQSEDGSHTLQSMYGCDLGPDGRLLRGYSQFAYDGKDYIALNEDLRSWTAADTAAQITQRKLEAARAAEQQRAYLEGLCVESLRRYLENGKETLQRAEPPKTHVTHHPLSDHEATLRCWALGFYPAEITLTWQRDGEDQTQDTELVETRPAGDGTFQKWAAVVVPSGQEQRYTCHMQHEGLPEPLTLRWEPSSQPTIPIVGIVVGLAVLVVLAVLGAVVTAMMCRRKSSGGKGGSCSQAACSNSAQGSDESLITCKA.

Positions 1-24 (MRVMAPRTLILLLSGALALTETWA) are cleaved as a signal peptide. An alpha-1 region spans residues 25-114 (GSHSMRYFYT…LRGYYNQSED (90 aa)). Residues 25-308 (GSHSMRYFYT…EPSSQPTIPI (284 aa)) lie on the Extracellular side of the membrane. The N-linked (GlcNAc...) asparagine glycan is linked to asparagine 110. The tract at residues 115-206 (GSHTLQSMYG…ENGKETLQRA (92 aa)) is alpha-2. Intrachain disulfides connect cysteine 125–cysteine 188 and cysteine 227–cysteine 283. Positions 207 to 298 (EPPKTHVTHH…GLPEPLTLRW (92 aa)) are alpha-3. Residues 209–297 (PKTHVTHHPL…EGLPEPLTLR (89 aa)) enclose the Ig-like C1-type domain. Residues 299 to 308 (EPSSQPTIPI) form a connecting peptide region. A helical membrane pass occupies residues 309–332 (VGIVVGLAVLVVLAVLGAVVTAMM). Residues 333 to 366 (CRRKSSGGKGGSCSQAACSNSAQGSDESLITCKA) are Cytoplasmic-facing.

This sequence belongs to the MHC class I family. In terms of assembly, heterodimer of an alpha chain and a beta chain (beta-2-microglobulin).

The protein localises to the membrane. Involved in the presentation of foreign antigens to the immune system. The sequence is that of Class I histocompatibility antigen, Gogo-C*0202 alpha chain from Gorilla gorilla gorilla (Western lowland gorilla).